Consider the following 170-residue polypeptide: Adenine phosphoribosyltransferase (170 aa).

It belongs to the purine/pyrimidine phosphoribosyltransferase family. Homodimer.

It localises to the cytoplasm. The catalysed reaction is AMP + diphosphate = 5-phospho-alpha-D-ribose 1-diphosphate + adenine. It functions in the pathway purine metabolism; AMP biosynthesis via salvage pathway; AMP from adenine: step 1/1. Functionally, catalyzes a salvage reaction resulting in the formation of AMP, that is energically less costly than de novo synthesis. The polypeptide is Adenine phosphoribosyltransferase (Fusobacterium nucleatum subsp. nucleatum (strain ATCC 25586 / DSM 15643 / BCRC 10681 / CIP 101130 / JCM 8532 / KCTC 2640 / LMG 13131 / VPI 4355)).